Reading from the N-terminus, the 282-residue chain is Bis(5'-nucleosyl)-tetraphosphatase, symmetrical (282 aa).

The protein belongs to the Ap4A hydrolase family.

It catalyses the reaction P(1),P(4)-bis(5'-adenosyl) tetraphosphate + H2O = 2 ADP + 2 H(+). Its function is as follows. Hydrolyzes diadenosine 5',5'''-P1,P4-tetraphosphate to yield ADP. The sequence is that of Bis(5'-nucleosyl)-tetraphosphatase, symmetrical from Salmonella agona (strain SL483).